The chain runs to 334 residues: Beta-1,3-N-acetylglucosaminyltransferase radical fringe (334 aa).

The Cytoplasmic portion of the chain corresponds to 1 to 6 (MSRVRR). Residues 7-29 (VLCRACLALAAVLAVLLLLPLPL) traverse the membrane as a helical; Signal-anchor for type II membrane protein segment. The Lumenal portion of the chain corresponds to 30–334 (PLPLPLPRAP…MKNRGKEAFQ (305 aa)). A substrate-binding site is contributed by Arg-77. Asn-116 carries N-linked (GlcNAc...) asparagine glycosylation. Cystine bridges form between Cys-117/Cys-128 and Cys-146/Cys-210. Asp-150 lines the substrate pocket. Residue Asp-151 coordinates Mn(2+). Asp-240 is an active-site residue. His-264 contributes to the Mn(2+) binding site. Cys-314 and Cys-323 are oxidised to a cystine.

Belongs to the glycosyltransferase 31 family. Mn(2+) serves as cofactor. In terms of tissue distribution, most abundantly expressed in adult brain. Expressed in most neurons of the brain but not in glial cells. Also detected to a lower extent in adult lung and kidney.

It is found in the golgi apparatus membrane. It carries out the reaction 3-O-(alpha-L-fucosyl)-L-threonyl-[EGF-like domain protein] + UDP-N-acetyl-alpha-D-glucosamine = 3-O-(N-acetyl-beta-D-glucosaminyl-(1-&gt;3)-alpha-L-fucosyl)-L-threonyl-[EGF-like domain protein] + UDP + H(+). It catalyses the reaction 3-O-(alpha-L-fucosyl)-L-seryl-[EGF-like domain protein] + UDP-N-acetyl-alpha-D-glucosamine = 3-O-(N-acetyl-beta-D-glucosaminyl-(1-&gt;3)-alpha-L-fucosyl)-L-seryl-[EGF-like domain protein] + UDP + H(+). Its function is as follows. Glycosyltransferase that initiates the elongation of O-linked fucose residues attached to EGF-like repeats in the extracellular domain of Notch molecules. Modulates NOTCH1 activity by modifying O-fucose residues at specific EGF-like domains resulting in enhancement of NOTCH1 activation by DLL1 and JAG1. Inhibits Notch signaling in postmitotic neurons of the brain. It may play a role in adult brain and in neurogenesis. It may play a role in limb development. The chain is Beta-1,3-N-acetylglucosaminyltransferase radical fringe from Rattus norvegicus (Rat).